The following is a 261-amino-acid chain: Pimeloyl-[acyl-carrier protein] methyl ester esterase (261 aa).

The 226-residue stretch at 16–241 (LVLIHGWGMN…QASHAPFISH (226 aa)) folds into the AB hydrolase-1 domain. Substrate-binding positions include Trp-22, 82–83 (SL), and 143–147 (FMTLQ). Residue Ser-82 is the Nucleophile of the active site. Catalysis depends on residues Asp-207 and His-235. His-235 is a substrate binding site.

It belongs to the AB hydrolase superfamily. Carboxylesterase BioH family. In terms of assembly, monomer.

It is found in the cytoplasm. It catalyses the reaction 6-carboxyhexanoyl-[ACP] methyl ester + H2O = 6-carboxyhexanoyl-[ACP] + methanol + H(+). The protein operates within cofactor biosynthesis; biotin biosynthesis. Its function is as follows. The physiological role of BioH is to remove the methyl group introduced by BioC when the pimeloyl moiety is complete. It allows to synthesize pimeloyl-ACP via the fatty acid synthetic pathway through the hydrolysis of the ester bonds of pimeloyl-ACP esters. The protein is Pimeloyl-[acyl-carrier protein] methyl ester esterase of Aliivibrio salmonicida (strain LFI1238) (Vibrio salmonicida (strain LFI1238)).